Here is a 209-residue protein sequence, read N- to C-terminus: Orotate phosphoribosyltransferase (209 aa).

5-phospho-alpha-D-ribose 1-diphosphate contacts are provided by residues R96, K100, H102, and 122 to 130; that span reads EDLISTGGS. S126 is an orotate binding site.

Belongs to the purine/pyrimidine phosphoribosyltransferase family. PyrE subfamily. As to quaternary structure, homodimer. It depends on Mg(2+) as a cofactor.

The catalysed reaction is orotidine 5'-phosphate + diphosphate = orotate + 5-phospho-alpha-D-ribose 1-diphosphate. The protein operates within pyrimidine metabolism; UMP biosynthesis via de novo pathway; UMP from orotate: step 1/2. Functionally, catalyzes the transfer of a ribosyl phosphate group from 5-phosphoribose 1-diphosphate to orotate, leading to the formation of orotidine monophosphate (OMP). This chain is Orotate phosphoribosyltransferase, found in Lactococcus lactis subsp. cremoris (strain MG1363).